The primary structure comprises 536 residues: Velvet complex subunit B (536 aa).

Over residues 1–26 (MIQRTTDPAAGSSTSGPPTNSLSWGS) the composition is skewed to polar residues. Disordered regions lie at residues 1-27 (MIQRTTDPAAGSSTSGPPTNSLSWGSR), 106-143 (PNAAQDRGPPMPAKPRRPTNPPPPSNTHGSPPAPAIPF), 157-409 (SAPA…RTLV), and 508-536 (KLPLRNRHGSGSKRRRRGAGGGSDDEESD). The Velvet domain maps to 25 to 512 (GSRHNGKLYT…NQQNMKLPLR (488 aa)). Over residues 114-143 (PPMPAKPRRPTNPPPPSNTHGSPPAPAIPF) the composition is skewed to pro residues. Composition is skewed to low complexity over residues 158 to 170 (APASDRSPSSASA) and 190 to 265 (PYGP…YPPY). A compositionally biased stretch (polar residues) spans 280-305 (TSNFDHSQPVTSSVDQETNSPVVTTT). The segment covering 306-315 (ARDDDQREGE) has biased composition (basic and acidic residues). A compositionally biased stretch (low complexity) spans 328–342 (PSNSGAPSTSPTAST). Residues 356 to 399 (EEREGPDGGPDLREPIEPGSTKAREEEDARTGTEKGDPKDKSDA) are compositionally biased toward basic and acidic residues. The span at 400–409 (QRATYTRTLV) shows a compositional bias: polar residues. A compositionally biased stretch (basic residues) spans 511–525 (LRNRHGSGSKRRRRG).

It belongs to the velvet family. VelB subfamily. Component of the heterotrimeric velvet complex composed of laeA, veA and velB; VeA acting as a bridging protein between laeA and velB. Forms a heterodimeric complex with vosA; the formation of the velB-vosA complex is light-dependent.

It localises to the nucleus. Its subcellular location is the cytoplasm. Its function is as follows. Component of the velvet transcription factor complex that controls sexual/asexual developmental ratio in response to light, promoting sexual development in the darkness while stimulating asexual sporulation under illumination. The velvet complex acts as a global regulator for secondary metabolite gene expression. Component of the velB-VosA heterodimeric complex that plays a dual role in activating genes associated with spore maturation and repressing certain development-associated genes. The velB-VosA complex binds DNA through the DNA-binding domain of vosA that recognizes an 11-nucleotide consensus sequence 5'-CTGGCCGCGGC-3' consisting of two motifs in the promoters of key developmental regulatory genes. In Schizophyllum commune (strain H4-8 / FGSC 9210) (Split gill fungus), this protein is Velvet complex subunit B.